Here is a 357-residue protein sequence, read N- to C-terminus: Glutamine synthetase cytosolic isozyme 1-2 (357 aa).

The GS beta-grasp domain occupies 19–99; that stretch reads IIAEYIWVGG…VMCDCYTPQG (81 aa). The GS catalytic domain occupies 106-357; it reads KRHSAAKIFS…AETTLLWKQN (252 aa).

This sequence belongs to the glutamine synthetase family. In terms of assembly, homooctamer. Expressed in roots and at lower levels in leaf blades and spikelets (rice flower).

The protein resides in the cytoplasm. The enzyme catalyses L-glutamate + NH4(+) + ATP = L-glutamine + ADP + phosphate + H(+). In terms of biological role, high-affinity glutamine synthetase involved in ammonium assimilation. Plays an important role in the primary assimilation of ammonium taken up by roots. Plays a role in maintaining nitrogen metabolic balance during ammonium assimilation, thus controlling plant growth and development. Reassimilates ammonium generated during lignification within developing tillers, which is probably required for the outgrowth of axillary buds. Required for nitrogen-dependent biosynthesis of cytokinin. Active cytokinin in axillary bud meristem is required for axillary bud outgrowth and necessary for tillering. The chain is Glutamine synthetase cytosolic isozyme 1-2 from Oryza sativa subsp. japonica (Rice).